The chain runs to 286 residues: Large ribosomal subunit protein uL3 (286 aa).

Q152 is subject to N5-methylglutamine. Over residues 246–265 (EAAAAAAAAEEQAAMEAAEA) the composition is skewed to low complexity. The tract at residues 246-286 (EAAAAAAAAEEQAAMEAAEAAEAKTDTVAEAEAAEKKEGDA) is disordered. Residues 266-286 (AEAKTDTVAEAEAAEKKEGDA) show a composition bias toward basic and acidic residues.

Belongs to the universal ribosomal protein uL3 family. In terms of assembly, part of the 50S ribosomal subunit. Forms a cluster with proteins L14 and L19. Post-translationally, methylated by PrmB.

Functionally, one of the primary rRNA binding proteins, it binds directly near the 3'-end of the 23S rRNA, where it nucleates assembly of the 50S subunit. This Roseobacter denitrificans (strain ATCC 33942 / OCh 114) (Erythrobacter sp. (strain OCh 114)) protein is Large ribosomal subunit protein uL3.